Reading from the N-terminus, the 750-residue chain is Photosystem I P700 chlorophyll a apoprotein A1 (750 aa).

Transmembrane regions (helical) follow at residues 70–93 (VFSA…FHGA), 156–179 (LYCT…FHYH), 195–219 (LNHH…HVSL), 291–309 (IAHH…GHMY), 346–369 (WHAQ…HHMY), 385–411 (LSLF…IFMV), 433–455 (AIIS…LYIH), and 531–549 (FLVH…LILL). [4Fe-4S] cluster-binding residues include Cys-573 and Cys-582. 2 consecutive transmembrane segments (helical) span residues 589-610 (HVFL…HFSW) and 664-686 (LSAY…MFLF). His-675 contributes to the chlorophyll a' binding site. 2 residues coordinate chlorophyll a: Met-683 and Tyr-691. Phylloquinone is bound at residue Trp-692. Residues 724–744 (AVGVTHYLLGGIATTWAFFLA) traverse the membrane as a helical segment.

The protein belongs to the PsaA/PsaB family. In terms of assembly, the PsaA/B heterodimer binds the P700 chlorophyll special pair and subsequent electron acceptors. PSI consists of a core antenna complex that captures photons, and an electron transfer chain that converts photonic excitation into a charge separation. The eukaryotic PSI reaction center is composed of at least 11 subunits. The cofactor is P700 is a chlorophyll a/chlorophyll a' dimer, A0 is one or more chlorophyll a, A1 is one or both phylloquinones and FX is a shared 4Fe-4S iron-sulfur center..

Its subcellular location is the plastid. The protein resides in the chloroplast thylakoid membrane. The enzyme catalyses reduced [plastocyanin] + hnu + oxidized [2Fe-2S]-[ferredoxin] = oxidized [plastocyanin] + reduced [2Fe-2S]-[ferredoxin]. PsaA and PsaB bind P700, the primary electron donor of photosystem I (PSI), as well as the electron acceptors A0, A1 and FX. PSI is a plastocyanin-ferredoxin oxidoreductase, converting photonic excitation into a charge separation, which transfers an electron from the donor P700 chlorophyll pair to the spectroscopically characterized acceptors A0, A1, FX, FA and FB in turn. Oxidized P700 is reduced on the lumenal side of the thylakoid membrane by plastocyanin. This chain is Photosystem I P700 chlorophyll a apoprotein A1, found in Coffea arabica (Arabian coffee).